Consider the following 154-residue polypeptide: Ribosome maturation factor RimP (154 aa).

The protein belongs to the RimP family.

Its subcellular location is the cytoplasm. Functionally, required for maturation of 30S ribosomal subunits. The protein is Ribosome maturation factor RimP of Cyanothece sp. (strain PCC 7425 / ATCC 29141).